Reading from the N-terminus, the 207-residue chain is Large ribosomal subunit protein uL4 (207 aa).

Positions 49 to 78 are disordered; the sequence is HAVKNRSAVRGGGRKPWRQKGTGRARQGSI. The span at 60–71 shows a compositional bias: basic residues; it reads GGRKPWRQKGTG.

Belongs to the universal ribosomal protein uL4 family. As to quaternary structure, part of the 50S ribosomal subunit.

One of the primary rRNA binding proteins, this protein initially binds near the 5'-end of the 23S rRNA. It is important during the early stages of 50S assembly. It makes multiple contacts with different domains of the 23S rRNA in the assembled 50S subunit and ribosome. Its function is as follows. Forms part of the polypeptide exit tunnel. In Enterococcus faecalis (strain ATCC 700802 / V583), this protein is Large ribosomal subunit protein uL4.